The primary structure comprises 253 residues: MALPLLQYKPSSQNHRVTSFGAADQNEDTPYIYRIEDVSSYTDIQNIIWASYRQVFSEHEILKFNRQKTLESQVKNGSISVRDFIRGLAKSEAFYRLVVSVNNNYRLVDITLKRLLGRSSYNKDEQIAWSIVIGTKGFSGFVDALIDSEEYTKNFGENIVPYQRKRMEGRPHNLVTPRYGEDFQEKAGTVQTDWRFTLDKFYSRKSQEKQLREGDPRKFADLAASVGNQGNYAQRISAFDIDYLNAVPNRSRR.

Residues 11–191 (SSQNHRVTSF…DFQEKAGTVQ (181 aa)) form the PBS-linker domain.

This sequence belongs to the phycobilisome linker protein family. As to quaternary structure, part of the phycobilisome, a hemidiscoidal structure that is composed of two distinct substructures: a core complex and a number of rods radiating from the core.

It localises to the cellular thylakoid membrane. Its function is as follows. Rod-core linker protein required for attachment of phycocyanin to allophycocyanin in cores of phycobilisomes. In terms of biological role, linker polypeptides determine the state of aggregation and the location of the disk-shaped phycobiliprotein units within the phycobilisome and modulate their spectroscopic properties in order to mediate a directed and optimal energy transfer. This chain is Phycobilisome rod-core linker polypeptide CpcG4, found in Nostoc sp. (strain PCC 7120 / SAG 25.82 / UTEX 2576).